Consider the following 556-residue polypeptide: Dihydroxy-acid dehydratase (556 aa).

Position 47 (Cys47) interacts with [2Fe-2S] cluster. Mg(2+) is bound at residue Asp79. Cys120 lines the [2Fe-2S] cluster pocket. 2 residues coordinate Mg(2+): Asp121 and Lys122. Lys122 bears the N6-carboxylysine mark. Cys192 contacts [2Fe-2S] cluster. Glu444 provides a ligand contact to Mg(2+). Ser470 acts as the Proton acceptor in catalysis.

The protein belongs to the IlvD/Edd family. In terms of assembly, homodimer. The cofactor is [2Fe-2S] cluster. Mg(2+) is required as a cofactor.

The catalysed reaction is (2R)-2,3-dihydroxy-3-methylbutanoate = 3-methyl-2-oxobutanoate + H2O. It carries out the reaction (2R,3R)-2,3-dihydroxy-3-methylpentanoate = (S)-3-methyl-2-oxopentanoate + H2O. The protein operates within amino-acid biosynthesis; L-isoleucine biosynthesis; L-isoleucine from 2-oxobutanoate: step 3/4. Its pathway is amino-acid biosynthesis; L-valine biosynthesis; L-valine from pyruvate: step 3/4. Functionally, functions in the biosynthesis of branched-chain amino acids. Catalyzes the dehydration of (2R,3R)-2,3-dihydroxy-3-methylpentanoate (2,3-dihydroxy-3-methylvalerate) into 2-oxo-3-methylpentanoate (2-oxo-3-methylvalerate) and of (2R)-2,3-dihydroxy-3-methylbutanoate (2,3-dihydroxyisovalerate) into 2-oxo-3-methylbutanoate (2-oxoisovalerate), the penultimate precursor to L-isoleucine and L-valine, respectively. The protein is Dihydroxy-acid dehydratase of Prochlorococcus marinus (strain NATL2A).